Here is a 643-residue protein sequence, read N- to C-terminus: Cytoplasmic dynein 1 intermediate chain 1 (643 aa).

2 stretches are compositionally biased toward basic and acidic residues: residues 1-13 (MSDK…ELER) and 20-60 (QIRE…RETE). 2 disordered regions span residues 1 to 65 (MSDK…LLQS) and 96 to 123 (MSPS…RTLQ). Serine 2 carries the N-acetylserine modification. Positions 2–123 (SDKSDLKAEL…DLGPLTRTLQ (122 aa)) are interaction with DCTN1. Serine 50 and serine 100 each carry phosphoserine. Over residues 96-107 (MSPSSKSVSTPS) the composition is skewed to low complexity. Residue threonine 105 is modified to Phosphothreonine. Phosphoserine is present on residues serine 107 and serine 111. The segment at 145-161 (KLGVSKVTQVDFLPREV) is interaction with DYNLT1. The segment at 167-219 (ETQTPLATHQSEEDEEDEEMVEPKVGHDSELENQDKKQETKEAPPRELTEEEK) is disordered. Threonine 174 carries the phosphothreonine modification. Serine 177 and serine 195 each carry phosphoserine. Over residues 187-219 (VEPKVGHDSELENQDKKQETKEAPPRELTEEEK) the composition is skewed to basic and acidic residues. WD repeat units lie at residues 283–332 (SKHR…TTPE), 336–376 (HCQS…RTPV), 385–426 (AHTH…TPQE), 435–475 (SKPV…AGIG), 480–525 (GHQG…PLYS), 528–568 (DNAD…EVPT), and 574–613 (EGAY…VPHN). Serine 633 is modified (phosphoserine).

This sequence belongs to the dynein intermediate chain family. As to quaternary structure, homodimer. The cytoplasmic dynein 1 complex consists of two catalytic heavy chains (HCs) and a number of non-catalytic subunits presented by intermediate chains (ICs), light intermediate chains (LICs) and light chains (LCs); the composition seems to vary in respect to the IC, LIC and LC composition. The heavy chain homodimer serves as a scaffold for the probable homodimeric assembly of the respective non-catalytic subunits. The ICs and LICs bind directly to the HC dimer and the LCs assemble on the IC dimer. Isoform 1, isoform 2 and isoform 3 interact with DYNC1H1. Isoform 1, isoform 2 and isoform 3 interact with DYNLT3. Isoform 1, isoform 2 and isoform 3 interact with DYNLT1. Interacts with DCTN1. Interacts with MCRS1; the interaction is required for the proper distribution of centriolar satellites. As to expression, high levels seen in the brain and testis, while a lower level expression is seen in the liver, spleen, kidney, lung, skeletal muscle and heart.

The protein localises to the cytoplasm. It localises to the chromosome. It is found in the centromere. The protein resides in the kinetochore. Its subcellular location is the cytoskeleton. The protein localises to the spindle pole. Acts as one of several non-catalytic accessory components of the cytoplasmic dynein 1 complex that are thought to be involved in linking dynein to cargos and to adapter proteins that regulate dynein function. Cytoplasmic dynein 1 acts as a motor for the intracellular retrograde motility of vesicles and organelles along microtubules. The intermediate chains mediate the binding of dynein to dynactin via its 150 kDa component (p150-glued) DCTN1. May play a role in mediating the interaction of cytoplasmic dynein with membranous organelles and kinetochores. The sequence is that of Cytoplasmic dynein 1 intermediate chain 1 (Dync1i1) from Rattus norvegicus (Rat).